The following is a 684-amino-acid chain: Proprotein convertase subtilisin/kexin type 9 (684 aa).

The signal sequence occupies residues 1–28; that stretch reads MGTVSSRRLWWPLPLLLLLLLGPPGARA. The propeptide occupies 29–151; it reads QEDDDGDYEE…IEEDSSVFAQ (123 aa). Y36 carries the post-translational modification Sulfotyrosine. The residue at position 45 (S45) is a Phosphoserine. Residues 75–148 enclose the Inhibitor I9 domain; the sequence is TYVVVLKDSD…VDYIEEDSSV (74 aa). Positions 154 to 460 constitute a Peptidase S8 domain; the sequence is PWNLERITPA…GWQLFCRTVW (307 aa). Residues D185 and H225 each act as charge relay system in the active site. 2 disulfides stabilise this stretch: C222/C254 and C322/C357. S385 functions as the Charge relay system in the catalytic mechanism. The C-terminal domain stretch occupies residues 451 to 684; it reads GWQLFCRTVW…AICCRSRHLA (234 aa). 3 disulfides stabilise this stretch: C456–C526, C476–C525, and C485–C508. An N-linked (GlcNAc...) asparagine glycan is attached at N532. Disulfide bonds link C533–C600, C551–C599, C561–C587, C607–C678, C625–C677, and C634–C653.

This sequence belongs to the peptidase S8 family. Monomer. Can self-associate to form dimers and higher multimers which may have increased LDLR degrading activity. The precursor protein but not the mature protein may form multimers. Interacts with APOB, VLDLR, LRP8/APOER2 and BACE1. The full-length immature form (pro-PCSK9) interacts with SCNN1A, SCNN1B and SCNN1G. The pro-PCSK9 form (via C-terminal domain) interacts with LDLR. Interacts (via the C-terminal domain) with ANXA2 (via repeat Annexin 1); the interaction inhibits the degradation of LDLR. Ca(2+) serves as cofactor. Post-translationally, cleavage by furin and PCSK5 generates a truncated inactive protein that is unable to induce LDLR degradation. In terms of processing, undergoes autocatalytic cleavage in the endoplasmic reticulum to release the propeptide from the N-terminus and the cleavage of the propeptide is strictly required for its maturation and activation. The cleaved propeptide however remains associated with the catalytic domain through non-covalent interactions, preventing potential substrates from accessing its active site. As a result, it is secreted from cells as a propeptide-containing, enzymatically inactive protein. Phosphorylation protects the propeptide against proteolysis.

It localises to the cytoplasm. The protein resides in the secreted. It is found in the endosome. The protein localises to the lysosome. Its subcellular location is the cell surface. It localises to the endoplasmic reticulum. The protein resides in the golgi apparatus. Its proteolytic activity is autoinhibited by the non-covalent binding of the propeptide to the catalytic domain. Inhibited by EGTA. Its function is as follows. Crucial player in the regulation of plasma cholesterol homeostasis. Binds to low-density lipid receptor family members: low density lipoprotein receptor (LDLR), very low density lipoprotein receptor (VLDLR), apolipoprotein E receptor (LRP1/APOER) and apolipoprotein receptor 2 (LRP8/APOER2), and promotes their degradation in intracellular acidic compartments. Acts via a non-proteolytic mechanism to enhance the degradation of the hepatic LDLR through a clathrin LDLRAP1/ARH-mediated pathway. May prevent the recycling of LDLR from endosomes to the cell surface or direct it to lysosomes for degradation. Can induce ubiquitination of LDLR leading to its subsequent degradation. Inhibits intracellular degradation of APOB via the autophagosome/lysosome pathway in a LDLR-independent manner. Involved in the disposal of non-acetylated intermediates of BACE1 in the early secretory pathway. Inhibits epithelial Na(+) channel (ENaC)-mediated Na(+) absorption by reducing ENaC surface expression primarily by increasing its proteasomal degradation. Regulates neuronal apoptosis via modulation of LRP8/APOER2 levels and related anti-apoptotic signaling pathways. The protein is Proprotein convertase subtilisin/kexin type 9 (PCSK9) of Plecturocebus moloch (Dusky titi monkey).